The primary structure comprises 36 residues: Omega-agatoxin-Aa1b (36 aa).

Belongs to the neurotoxin 04 (omega-agtx) family. 01 (type I omega-agtx) subfamily. In terms of tissue distribution, expressed by the venom gland.

Its subcellular location is the secreted. Functionally, omega-agatoxin are antagonist of voltage-gated calcium channels. They block insect neuromuscular transmission presynaptically. This toxin is a blocker of L-type calcium channels (Cav/CACNA1). The polypeptide is Omega-agatoxin-Aa1b (Agelenopsis aperta (North American funnel-web spider)).